The following is a 341-amino-acid chain: L-threonine 3-dehydrogenase (341 aa).

C38 serves as a coordination point for Zn(2+). Catalysis depends on charge relay system residues T40 and H43. Zn(2+) contacts are provided by H63, E64, C93, C96, C99, and C107. NAD(+) contacts are provided by residues I175, D195, R200, 262-264 (LGI), and 286-287 (IY).

This sequence belongs to the zinc-containing alcohol dehydrogenase family. In terms of assembly, homotetramer. Zn(2+) is required as a cofactor.

It localises to the cytoplasm. It carries out the reaction L-threonine + NAD(+) = (2S)-2-amino-3-oxobutanoate + NADH + H(+). Its pathway is amino-acid degradation; L-threonine degradation via oxydo-reductase pathway; glycine from L-threonine: step 1/2. In terms of biological role, catalyzes the NAD(+)-dependent oxidation of L-threonine to 2-amino-3-ketobutyrate. This Chromobacterium violaceum (strain ATCC 12472 / DSM 30191 / JCM 1249 / CCUG 213 / NBRC 12614 / NCIMB 9131 / NCTC 9757 / MK) protein is L-threonine 3-dehydrogenase.